A 272-amino-acid chain; its full sequence is HMP-PP phosphatase (272 aa).

Asp-8 functions as the Nucleophile in the catalytic mechanism. Mg(2+)-binding residues include Asp-8, Asp-10, and Asp-212.

The protein belongs to the HAD-like hydrolase superfamily. Cof family. Requires Mg(2+) as cofactor.

It catalyses the reaction 4-amino-2-methyl-5-(diphosphooxymethyl)pyrimidine + H2O = 4-amino-2-methyl-5-(phosphooxymethyl)pyrimidine + phosphate + H(+). Its function is as follows. Catalyzes the hydrolysis of 4-amino-2-methyl-5-hydroxymethylpyrimidine pyrophosphate (HMP-PP) to 4-amino-2-methyl-5-hydroxymethylpyrimidine phosphate (HMP-P). The protein is HMP-PP phosphatase of Klebsiella pneumoniae (strain 342).